Consider the following 562-residue polypeptide: Protein FAM222B (562 aa).

Low complexity-rich tracts occupy residues 155–167 (QQAL…LAHA) and 183–201 (ALSH…HPQP). Disordered regions lie at residues 155–203 (QQAL…QPMA), 219–245 (LQHP…VTVS), and 537–562 (AHRA…PGYR).

This sequence belongs to the FAM222 family.

The polypeptide is Protein FAM222B (FAM222B) (Homo sapiens (Human)).